The primary structure comprises 199 residues: UPF0637 protein YsbB (199 aa).

This sequence belongs to the UPF0637 family.

The polypeptide is UPF0637 protein YsbB (ysbB) (Lactococcus lactis subsp. lactis (strain IL1403) (Streptococcus lactis)).